A 512-amino-acid polypeptide reads, in one-letter code: Maturase K (512 aa).

Belongs to the intron maturase 2 family. MatK subfamily.

It is found in the plastid. The protein localises to the chloroplast. Usually encoded in the trnK tRNA gene intron. Probably assists in splicing its own and other chloroplast group II introns. In Lilium longiflorum (Trumpet lily), this protein is Maturase K.